The sequence spans 122 residues: Large ribosomal subunit protein bL12 (122 aa).

The protein belongs to the bacterial ribosomal protein bL12 family. In terms of assembly, homodimer. Part of the ribosomal stalk of the 50S ribosomal subunit. Forms a multimeric L10(L12)X complex, where L10 forms an elongated spine to which 2 to 4 L12 dimers bind in a sequential fashion. Binds GTP-bound translation factors.

Its function is as follows. Forms part of the ribosomal stalk which helps the ribosome interact with GTP-bound translation factors. Is thus essential for accurate translation. The sequence is that of Large ribosomal subunit protein bL12 from Lacticaseibacillus casei (strain BL23) (Lactobacillus casei).